Here is a 250-residue protein sequence, read N- to C-terminus: Large ribosomal subunit protein uL13c (250 aa).

The transit peptide at 1 to 47 directs the protein to the chloroplast; it reads MATMACASSLTFPSAQTQKSFFGTNVKQTPVLSFPRPTVAAAVAVSA.

Component of the chloroplast large ribosomal subunit (LSU). Mature 70S chloroplast ribosomes of higher plants consist of a small (30S) and a large (50S) subunit. The 30S small subunit contains 1 molecule of ribosomal RNA (16S rRNA) and 24 different proteins. The 50S large subunit contains 3 rRNA molecules (23S, 5S and 4.5S rRNA) and 33 different proteins.

It localises to the plastid. The protein localises to the chloroplast. Component of the chloroplast ribosome (chloro-ribosome), a dedicated translation machinery responsible for the synthesis of chloroplast genome-encoded proteins, including proteins of the transcription and translation machinery and components of the photosynthetic apparatus. In Spinacia oleracea (Spinach), this protein is Large ribosomal subunit protein uL13c (RPL13).